A 225-amino-acid polypeptide reads, in one-letter code: Perlwapin-like protein (225 aa).

An N-terminal signal peptide occupies residues 1-19 (MNHLWLFIVTVSCIYLVYG). Intrachain disulfides connect Cys-27/Cys-57, Cys-36/Cys-61, Cys-43/Cys-56, and Cys-49/Cys-65. Positions 27–68 (CKVKFMGTACPLGRLVCEEDGDCLGVNQVCCYDGCGTTCHNK) constitute a WAP 1; atypical domain. N-linked (GlcNAc...) asparagine glycosylation occurs at Asn-67. The WAP 2 domain occupies 117–169 (IIPSPELLCPVVTVRYAFCRFSTYTPCHTSNDCAVPGMKCCPDVCGKRCKFPI). 4 disulfide bridges follow: Cys-125–Cys-157, Cys-135–Cys-161, Cys-143–Cys-156, and Cys-149–Cys-165. Asn-170 carries N-linked (GlcNAc...) asparagine glycosylation. The tract at residues 176–225 (QFQQTPLKPTVPLPQYQQTPLQPTVPSSQPPLQPTVPSPQSYNYKGACST) is disordered. The segment covering 188–201 (LPQYQQTPLQPTVP) has biased composition (low complexity). Positions 203–212 (SQPPLQPTVP) are enriched in pro residues. Polar residues predominate over residues 213-225 (SPQSYNYKGACST).

As to expression, component of the acid-soluble organic matrix of calcified layers of the shell (at protein level).

It localises to the secreted. In Lottia gigantea (Giant owl limpet), this protein is Perlwapin-like protein.